The chain runs to 298 residues: Inosose dehydratase (298 aa).

It belongs to the IolE/MocC family. Glutathione is required as a cofactor. Requires Co(2+) as cofactor. The cofactor is Mn(2+).

It carries out the reaction scyllo-inosose = 3D-3,5/4-trihydroxycyclohexane-1,2-dione + H2O. Its pathway is polyol metabolism; myo-inositol degradation into acetyl-CoA; acetyl-CoA from myo-inositol: step 2/7. Its function is as follows. Catalyzes the dehydration of inosose (2-keto-myo-inositol, 2KMI or 2,4,6/3,5-pentahydroxycyclohexanone) to 3D-(3,5/4)-trihydroxycyclohexane-1,2-dione (D-2,3-diketo-4-deoxy-epi-inositol). The polypeptide is Inosose dehydratase (Geobacillus thermodenitrificans (strain NG80-2)).